The sequence spans 123 residues: Large ribosomal subunit protein bL12 (123 aa).

This sequence belongs to the bacterial ribosomal protein bL12 family. In terms of assembly, homodimer. Part of the ribosomal stalk of the 50S ribosomal subunit. Forms a multimeric L10(L12)X complex, where L10 forms an elongated spine to which 2 to 4 L12 dimers bind in a sequential fashion. Binds GTP-bound translation factors.

Functionally, forms part of the ribosomal stalk which helps the ribosome interact with GTP-bound translation factors. Is thus essential for accurate translation. The polypeptide is Large ribosomal subunit protein bL12 (Rhodospirillum rubrum (strain ATCC 11170 / ATH 1.1.1 / DSM 467 / LMG 4362 / NCIMB 8255 / S1)).